The sequence spans 482 residues: MDFNSLRKEIINNNASVKELVNDFFDKIKHKDPEINSYICTTKDNAIEQAENIDKLIQNKEKLPPLAGIPIAIKDNICTKGVATTCASKMLKSFVPPYESTASSKLWSSGGICLGKTNLDEFAMGSSTETSLFGVTSNPWDINRVPGGSSGGSAASVAAGFCAAAIGSDTGGSIRQPASFCGVVGLKPTYGRVSRWGLVAFASSLDQIGPITNTVSDAAEILYSISGKDPFDSTCLDKPVPNYLNDLNKSINGLKIGIIKECFEHPGLNQEVKESVLSGVDRFKALGAEIIEVECPRFNDGIATYYVIAPSEASANLARYDGVKYGYRSKEGSNLVDMTSKSRAKGFGDEVQRRILIGTYALSAGYSDAYYKKAQKVRTLIRKDFDNAFKKVDVLLTPTCPTTAFLKGDYVNDPLSMYLSDLLTVPVNLAGLPAISIPCGFDTKGLPIGLQLIGNVLEEGKILNAANIFEIDAQVIKNRPLF.

Residues Lys74 and Ser149 each act as charge relay system in the active site. Ser173 (acyl-ester intermediate) is an active-site residue.

Belongs to the amidase family. GatA subfamily. As to quaternary structure, heterotrimer of A, B and C subunits.

The enzyme catalyses L-glutamyl-tRNA(Gln) + L-glutamine + ATP + H2O = L-glutaminyl-tRNA(Gln) + L-glutamate + ADP + phosphate + H(+). Functionally, allows the formation of correctly charged Gln-tRNA(Gln) through the transamidation of misacylated Glu-tRNA(Gln) in organisms which lack glutaminyl-tRNA synthetase. The reaction takes place in the presence of glutamine and ATP through an activated gamma-phospho-Glu-tRNA(Gln). This chain is Glutamyl-tRNA(Gln) amidotransferase subunit A, found in Prochlorococcus marinus (strain MIT 9215).